Consider the following 397-residue polypeptide: CCA-adding enzyme (397 aa).

Residues Gly-26 and Arg-29 each contribute to the ATP site. Residues Gly-26 and Arg-29 each contribute to the CTP site. Positions 39 and 41 each coordinate Mg(2+). ATP is bound by residues Arg-110, Asp-153, Arg-156, Arg-159, and Arg-162. Positions 110, 153, 156, 159, and 162 each coordinate CTP.

This sequence belongs to the tRNA nucleotidyltransferase/poly(A) polymerase family. Bacterial CCA-adding enzyme type 3 subfamily. In terms of assembly, homodimer. The cofactor is Mg(2+).

The enzyme catalyses a tRNA precursor + 2 CTP + ATP = a tRNA with a 3' CCA end + 3 diphosphate. It catalyses the reaction a tRNA with a 3' CCA end + 2 CTP + ATP = a tRNA with a 3' CCACCA end + 3 diphosphate. In terms of biological role, catalyzes the addition and repair of the essential 3'-terminal CCA sequence in tRNAs without using a nucleic acid template. Adds these three nucleotides in the order of C, C, and A to the tRNA nucleotide-73, using CTP and ATP as substrates and producing inorganic pyrophosphate. tRNA 3'-terminal CCA addition is required both for tRNA processing and repair. Also involved in tRNA surveillance by mediating tandem CCA addition to generate a CCACCA at the 3' terminus of unstable tRNAs. While stable tRNAs receive only 3'-terminal CCA, unstable tRNAs are marked with CCACCA and rapidly degraded. The chain is CCA-adding enzyme from Bacillus cereus (strain Q1).